A 286-amino-acid chain; its full sequence is Shikimate dehydrogenase (NADP(+)) (286 aa).

Residues 22-24 (SRS) and Thr-71 each bind shikimate. Lys-75 (proton acceptor) is an active-site residue. An NADP(+)-binding site is contributed by Glu-87. Shikimate is bound by residues Asn-96 and Asp-111. NADP(+) contacts are provided by residues 136-140 (GAGGA), 160-165 (NRTVER), and Ile-225. Shikimate is bound at residue Tyr-227. Gly-248 provides a ligand contact to NADP(+).

The protein belongs to the shikimate dehydrogenase family. Homodimer.

It catalyses the reaction shikimate + NADP(+) = 3-dehydroshikimate + NADPH + H(+). It participates in metabolic intermediate biosynthesis; chorismate biosynthesis; chorismate from D-erythrose 4-phosphate and phosphoenolpyruvate: step 4/7. Involved in the biosynthesis of the chorismate, which leads to the biosynthesis of aromatic amino acids. Catalyzes the reversible NADPH linked reduction of 3-dehydroshikimate (DHSA) to yield shikimate (SA). The protein is Shikimate dehydrogenase (NADP(+)) of Rhizobium rhizogenes (strain K84 / ATCC BAA-868) (Agrobacterium radiobacter).